Here is a 226-residue protein sequence, read N- to C-terminus: Phosphoglycolate phosphatase (226 aa).

The active-site Nucleophile is Asp-9. Residues Asp-9 and Asp-11 each contribute to the Mg(2+) site. A substrate-binding site is contributed by Lys-150. Mg(2+) contacts are provided by Asp-173 and Asp-177.

It belongs to the archaeal SPP-like hydrolase family. The cofactor is Mg(2+).

The enzyme catalyses 2-phosphoglycolate + H2O = glycolate + phosphate. Its function is as follows. Catalyzes the dephosphorylation of 2-phosphoglycolate. The protein is Phosphoglycolate phosphatase of Methanosarcina acetivorans (strain ATCC 35395 / DSM 2834 / JCM 12185 / C2A).